The following is a 90-amino-acid chain: MAVTYEKTFEIEIINELSASVYNRVLNYVLNHELDTKNTRLLEVNLLNQLEVAQEVDLFQQPFEELQAIHEYWRSMNQYSKQILTKEKVA.

The protein belongs to the epsilon antitoxin family. In the presence of the zeta toxin, forms an inactive PezA(2)PezT(2) heterotetramer.

In terms of biological role, antitoxin component of a type II toxin-antitoxin (TA) system. Neutralizes the toxic effect of zeta toxin. Part of a postsegregational killing (PSK) system involved in the killing of plasmid-free cells. Continuous synthesis of the epsilon antitoxin is required to counteract the zeta toxin. This Enterococcus faecalis (Streptococcus faecalis) protein is Antitoxin epsilon 2.